The sequence spans 314 residues: DNA-directed RNA polymerase subunit alpha (314 aa).

The alpha N-terminal domain (alpha-NTD) stretch occupies residues 1 to 228 (MAQFQIECVE…NLFIPLKDLN (228 aa)). An alpha C-terminal domain (alpha-CTD) region spans residues 243-314 (PESQIPIEEL…ITLPHEKAKA (72 aa)).

It belongs to the RNA polymerase alpha chain family. As to quaternary structure, homodimer. In cyanobacteria the RNAP catalytic core is composed of 2 alpha, 1 beta, 1 beta', 1 gamma and 1 omega subunit. When a sigma factor is associated with the core the holoenzyme is formed, which can initiate transcription.

It carries out the reaction RNA(n) + a ribonucleoside 5'-triphosphate = RNA(n+1) + diphosphate. Functionally, DNA-dependent RNA polymerase catalyzes the transcription of DNA into RNA using the four ribonucleoside triphosphates as substrates. The polypeptide is DNA-directed RNA polymerase subunit alpha (Synechocystis sp. (strain ATCC 27184 / PCC 6803 / Kazusa)).